The chain runs to 386 residues: Rhomboid domain-containing protein 3 (386 aa).

Helical transmembrane passes span 20-40, 58-78, 92-112, 141-161, and 163-183; these read VLMLLMSTLWLVGAGPGLVLA, LGHTALPGLLLSLLLLPTVGW, ASALLALASGLLAVLLAGLGL, GALPPWLSPWLLLALTPLLSS, and PPFLQLLCGLLAGLAYAAGAF. The region spanning 324–362 is the UBA domain; the sequence is VSSLRLQQLERMGFPTEQAVVALAATGRVEGAVSLLVGG.

The protein localises to the membrane. This Homo sapiens (Human) protein is Rhomboid domain-containing protein 3 (RHBDD3).